We begin with the raw amino-acid sequence, 78 residues long: U7-lycotoxin-Ls1d (78 aa).

The N-terminal stretch at 1-22 is a signal peptide; that stretch reads MKLIIFTGLALLLIVSLIDVEA. A propeptide spanning residues 23 to 26 is cleaved from the precursor; the sequence is QNEG.

It belongs to the neurotoxin 19 (CSTX) family. 07 (U7-Lctx) subfamily. Post-translationally, contains 4 disulfide bonds. In terms of tissue distribution, expressed by the venom gland.

It is found in the secreted. This chain is U7-lycotoxin-Ls1d, found in Lycosa singoriensis (Wolf spider).